The following is a 363-amino-acid chain: Aminomethyltransferase (363 aa).

It belongs to the GcvT family. In terms of assembly, the glycine cleavage system is composed of four proteins: P, T, L and H.

The enzyme catalyses N(6)-[(R)-S(8)-aminomethyldihydrolipoyl]-L-lysyl-[protein] + (6S)-5,6,7,8-tetrahydrofolate = N(6)-[(R)-dihydrolipoyl]-L-lysyl-[protein] + (6R)-5,10-methylene-5,6,7,8-tetrahydrofolate + NH4(+). Functionally, the glycine cleavage system catalyzes the degradation of glycine. This Staphylococcus haemolyticus (strain JCSC1435) protein is Aminomethyltransferase.